A 433-amino-acid chain; its full sequence is tRNA(Ile)-lysidine synthase (433 aa).

27–32 (SGGLDS) lines the ATP pocket.

This sequence belongs to the tRNA(Ile)-lysidine synthase family.

The protein localises to the cytoplasm. It catalyses the reaction cytidine(34) in tRNA(Ile2) + L-lysine + ATP = lysidine(34) in tRNA(Ile2) + AMP + diphosphate + H(+). Functionally, ligates lysine onto the cytidine present at position 34 of the AUA codon-specific tRNA(Ile) that contains the anticodon CAU, in an ATP-dependent manner. Cytidine is converted to lysidine, thus changing the amino acid specificity of the tRNA from methionine to isoleucine. This is tRNA(Ile)-lysidine synthase from Legionella pneumophila subsp. pneumophila (strain Philadelphia 1 / ATCC 33152 / DSM 7513).